Here is a 493-residue protein sequence, read N- to C-terminus: Tripartite motif-containing protein 5 (493 aa).

The residue at position 2 (Ala-2) is an N-acetylalanine. The segment at 15 to 59 (CPICLELLTQPLSLDCGHSFCQACLTANHKKSMLDKGESSCPVCR) adopts an RING-type zinc-finger fold. Ser-86 is subject to Phosphoserine. The segment at 90–132 (QKVDHCARHGEKLLLFCQEDGKVICWLCERSQEHRGHHTFLTE) adopts a B box-type zinc-finger fold. 4 residues coordinate Zn(2+): Cys-95, His-98, Cys-117, and His-123. Residues 130-241 (LTEEVAREYQ…ISDLEHRLQG (112 aa)) are a coiled coil. A required for interaction with GABARAP and for autophagy region spans residues 185 to 198 (FEQLRDILDWEESN). Positions 281–493 (LKGMLEVFRE…VPMTLCSPSS (213 aa)) constitute a B30.2/SPRY domain.

The protein belongs to the TRIM/RBCC family. Can form homodimers and homotrimers. In addition to lower-order dimerization, also exhibits a higher-order multimerization and both low- and high-order multimerizations are essential for its restriction activity. Isoform Delta interacts with BTBD1 and BTBD2. Interacts with PSMC4, PSMC5, PSMD7 and HSPA8/HSC70. Interacts (via B30.2/SPRY domain) with HSPA1A/B. Interacts with PSMC2, MAP3K7/TAK1, TAB2 and TAB3. Interacts with SQSTM1. Interacts with TRIM6 and TRIM34. Interacts with ULK1 (phosphorylated form), GABARAP, GABARAPL1, GABARAPL2, MAP1LC3A, MAP1LC3C and BECN1. Post-translationally, degraded in a proteasome-independent fashion in the absence of viral infection but in a proteasome-dependent fashion following exposure to restriction sensitive virus. In terms of processing, autoubiquitinated in a RING finger- and UBE2D2-dependent manner. Monoubiquitinated by TRIM21. Deubiquitinated by Yersinia YopJ. Ubiquitination may not lead to proteasomal degradation.

The protein resides in the cytoplasm. The protein localises to the nucleus. It catalyses the reaction S-ubiquitinyl-[E2 ubiquitin-conjugating enzyme]-L-cysteine + [acceptor protein]-L-lysine = [E2 ubiquitin-conjugating enzyme]-L-cysteine + N(6)-ubiquitinyl-[acceptor protein]-L-lysine.. Its pathway is protein modification; protein ubiquitination. In terms of biological role, capsid-specific restriction factor that prevents infection from non-host-adapted retroviruses. Blocks viral replication early in the life cycle, after viral entry but before reverse transcription. In addition to acting as a capsid-specific restriction factor, also acts as a pattern recognition receptor that activates innate immune signaling in response to the retroviral capsid lattice. Binding to the viral capsid triggers its E3 ubiquitin ligase activity, and in concert with the heterodimeric ubiquitin conjugating enzyme complex UBE2V1-UBE2N (also known as UBC13-UEV1A complex) generates 'Lys-63'-linked polyubiquitin chains, which in turn are catalysts in the autophosphorylation of the MAP3K7/TAK1 complex (includes TAK1, TAB2, and TAB3). Activation of the MAP3K7/TAK1 complex by autophosphorylation results in the induction and expression of NF-kappa-B and MAPK-responsive inflammatory genes, thereby leading to an innate immune response in the infected cell. Restricts infection by N-tropic murine leukemia virus (N-MLV), equine infectious anemia virus (EIAV), simian immunodeficiency virus of macaques (SIVmac), feline immunodeficiency virus (FIV), and bovine immunodeficiency virus (BIV). Plays a role in regulating autophagy through activation of autophagy regulator BECN1 by causing its dissociation from its inhibitors BCL2 and TAB2. Also plays a role in autophagy by acting as a selective autophagy receptor which recognizes and targets HIV-1 capsid protein p24 for autophagic destruction. In Homo sapiens (Human), this protein is Tripartite motif-containing protein 5 (TRIM5).